The following is a 337-amino-acid chain: tRNA N6-adenosine threonylcarbamoyltransferase (337 aa).

Positions 111 and 115 each coordinate Fe cation. Substrate is bound by residues 134 to 138 (LVSGG), Asp-167, Gly-180, and Asn-272. Asp-300 lines the Fe cation pocket.

Belongs to the KAE1 / TsaD family. It depends on Fe(2+) as a cofactor.

The protein localises to the cytoplasm. It catalyses the reaction L-threonylcarbamoyladenylate + adenosine(37) in tRNA = N(6)-L-threonylcarbamoyladenosine(37) in tRNA + AMP + H(+). Functionally, required for the formation of a threonylcarbamoyl group on adenosine at position 37 (t(6)A37) in tRNAs that read codons beginning with adenine. Is involved in the transfer of the threonylcarbamoyl moiety of threonylcarbamoyl-AMP (TC-AMP) to the N6 group of A37, together with TsaE and TsaB. TsaD likely plays a direct catalytic role in this reaction. The chain is tRNA N6-adenosine threonylcarbamoyltransferase from Escherichia coli O139:H28 (strain E24377A / ETEC).